We begin with the raw amino-acid sequence, 54 residues long: Toxin AnmTx Cj 1c-1 (54 aa).

An N-terminal signal peptide occupies residues 1–7 (MLNKRGV). Intrachain disulfides connect cysteine 9–cysteine 50, cysteine 11–cysteine 41, and cysteine 33–cysteine 51. Glutamate 53 carries the glutamic acid 1-amide modification.

Belongs to the sea anemone sodium channel inhibitory toxin family. Type I subfamily. Contains 3 disulfide bonds.

It localises to the secreted. The protein localises to the nematocyst. Its function is as follows. In vivo, induces marked paralysis on shrimps (C.multidentata) at 10-20 seconds after injection and a weak toxicity when injected into insect larvae (M.domestica). The polypeptide is Toxin AnmTx Cj 1c-1 (Epiactis japonica (Sea anemone)).